The following is a 97-amino-acid chain: Mapk-regulated corepressor-interacting protein 1 (97 aa).

Over residues 1–26 the composition is skewed to polar residues; sequence MTSSSTPRMHTYKRTSSPRSPTNTGE. Disordered stretches follow at residues 1-27 and 54-97; these read MTSSSTPRMHTYKRTSSPRSPTNTGEL and QNHE…SKKS. Composition is skewed to basic and acidic residues over residues 54-68 and 84-97; these read QNHERNDRGPQEYVE and SDLKKRNTQDSKKS. Positions 80-84 match the PXDLS motif motif; it reads PVDLS.

The protein belongs to the MCRIP family.

It localises to the nucleus. The protein localises to the cytoplasm. Its subcellular location is the stress granule. In terms of biological role, may play a role in the regulation of the epithelial-mesenchymal transition. In Danio rerio (Zebrafish), this protein is Mapk-regulated corepressor-interacting protein 1 (mcrip1).